We begin with the raw amino-acid sequence, 271 residues long: Autophagy-related protein 5 (271 aa).

Lysine 145 participates in a covalent cross-link: Glycyl lysine isopeptide (Lys-Gly) (interchain with G-Cter in ATG12).

It belongs to the ATG5 family. Conjugated with ATG12. Interacts with ATG10. The ATG5-ATG12 conjugate forms a complex with several units of ATG16. The ATG12-ATG5 conjugate also associates with ATG3. Post-translationally, conjugated to ATG12; which is essential for autophagy. Conjugation with ATG12 involves ATG7 as an E1-like activating enzyme and ATG10 as an E2-like conjugating enzyme.

The protein localises to the preautophagosomal structure membrane. Its function is as follows. Involved in cytoplasm to vacuole transport (Cvt) and autophagic vesicle formation. Autophagy is essential for maintenance of amino acid levels and protein synthesis under nitrogen starvation. Required for selective autophagic degradation of the nucleus (nucleophagy). Also required for mitophagy, which eliminates defective or superfluous mitochondria in order to fulfill cellular energy requirements and prevent excess ROS production. Conjugation with ATG12, through a ubiquitin-like conjugating system involving ATG7 as an E1-like activating enzyme and ATG10 as an E2-like conjugating enzyme, is essential for its function. The ATG12-ATG5 conjugate acts as an E3-like enzyme which is required for lipidation of ATG8 and ATG8 association to the vesicle membranes. ATG12-ATG5 rearranges the ATG3 catalytic center and enhances its E2 activity. This Kluyveromyces marxianus (strain DMKU3-1042 / BCC 29191 / NBRC 104275) (Yeast) protein is Autophagy-related protein 5.